We begin with the raw amino-acid sequence, 58 residues long: MRQLKGKVKETRKQKKERKLDNLETQAKIRTVVLPALGVLAVFLVLFVYLKTRPAVLA.

The stretch at 1-31 forms a coiled coil; that stretch reads MRQLKGKVKETRKQKKERKLDNLETQAKIRT. A helical membrane pass occupies residues 31 to 51; sequence TVVLPALGVLAVFLVLFVYLK.

The protein belongs to the SMCO4 family.

It localises to the membrane. The chain is Single-pass membrane and coiled-coil domain-containing protein 4 homolog from Drosophila melanogaster (Fruit fly).